A 583-amino-acid polypeptide reads, in one-letter code: PTS system lactose-specific EIICB component (583 aa).

The PTS EIIC type-3 domain occupies 8–409; sequence IEKGKPFFEK…VVDVMIYYPF (402 aa). The next 9 membrane-spanning stretches (helical) occupy residues 30–50, 64–84, 103–123, 137–157, 176–196, 222–242, 283–303, 339–359, and 381–401; these read GFIAAIPIILFSSIFILITYV, GILMKPYNYTMGIVGLIVAGT, INFISTMMAAMSGFLFLAADP, KGLLTAFISAFITVIVYNFFI, VFKDIFPLSAVIIIIYALDLL, GWIGVTLIFGAFAFFWFVGIH, FVATMGGTGATLVVPFMFMWL, VFFIPFIFAPIVNVWIFKFFV, and IVMGTGFAFWSFVLAIVLIVV. Low complexity predominate over residues 453–462; that stretch reads ANETTTTESA. The interval 453 to 475 is disordered; that stretch reads ANETTTTESAPSDEEVSAKNSSN. A PTS EIIB type-3 domain is found at 480–583; that stretch reads QTNVLVLCAG…LDFVQQQFEK (104 aa). C487 acts as the Phosphocysteine intermediate; for EIIB activity in catalysis. At C487 the chain carries Phosphocysteine; by EIIA.

Its subcellular location is the cell membrane. The enzyme catalyses lactose(out) + N(pros)-phospho-L-histidyl-[protein] = lactose 6-phosphate(in) + L-histidyl-[protein]. Functionally, the phosphoenolpyruvate-dependent sugar phosphotransferase system (sugar PTS), a major carbohydrate active transport system, catalyzes the phosphorylation of incoming sugar substrates concomitantly with their translocation across the cell membrane. The enzyme II LacEF PTS system is involved in lactose transport. The polypeptide is PTS system lactose-specific EIICB component (Staphylococcus haemolyticus (strain JCSC1435)).